We begin with the raw amino-acid sequence, 111 residues long: Cornifelin homolog A (111 aa).

This sequence belongs to the cornifelin family.

The chain is Cornifelin homolog A (cnfn-a) from Xenopus laevis (African clawed frog).